The sequence spans 691 residues: Calcium-binding and coiled-coil domain-containing protein 1 (691 aa).

Residues 1–30 (MEESSLSRAPSRGGVNFLNVARTYIPNTKV) are p300 KIX-binding. An N-terminal AD (CTNNB1 binding site) region spans residues 1-190 (MEESSLSRAP…VQELEAALAT (190 aa)). Residue Ser4 is modified to Phosphoserine. The interval 45–125 (SDWIGIFKVE…FQFREPRPMD (81 aa)) is interaction with GATA1. Coiled-coil stretches lie at residues 145-205 (KATV…YKGL), 232-339 (ELED…AELE), and 417-514 (QSME…ADEK). A C-terminal AD (CTNNB1 binding site); interaction with CCAR1 region spans residues 501 to 691 (RKLEARLEKV…FSTQDPFTFE (191 aa)). Positions 512–605 (DEKWTEDAAT…DSEAEDEKSV (94 aa)) are disordered. A UBZ1-type zinc finger spans residues 653–679 (WKECPICKERFPAESDKDALEGHMDGH). Zn(2+) contacts are provided by Cys656, Cys659, His675, and His679.

This sequence belongs to the CALCOCO family. In terms of assembly, part of a calphoglin complex consisting of CALCOCO1, PPA1 and PGM. Interacts with the bHLH-PAS domains of GRIP1, AHR and ARNT. Interacts with CTNNB1 via both its N- and C-terminal regions. Interacts with EP300. Interacts with CCAR1 (via N-terminus) and GATA1. In terms of tissue distribution, expressed in all tissues examined except spleen, with high levels of expression in the heart and kidney.

It localises to the cytoplasm. Its subcellular location is the nucleus. In terms of biological role, functions as a coactivator for aryl hydrocarbon and nuclear receptors (NR). Recruited to promoters through its contact with the N-terminal basic helix-loop-helix-Per-Arnt-Sim (PAS) domain of transcription factors or coactivators, such as NCOA2. During ER-activation acts synergistically in combination with other NCOA2-binding proteins, such as EP300, CREBBP and CARM1. Involved in the transcriptional activation of target genes in the Wnt/CTNNB1 pathway. Functions as a secondary coactivator in LEF1-mediated transcriptional activation via its interaction with CTNNB1. Coactivator function for nuclear receptors and LEF1/CTNNB1 involves differential utilization of two different activation regions. In association with CCAR1 enhances GATA1- and MED1-mediated transcriptional activation from the gamma-globin promoter during erythroid differentiation of K562 erythroleukemia cells. The sequence is that of Calcium-binding and coiled-coil domain-containing protein 1 (Calcoco1) from Mus musculus (Mouse).